Reading from the N-terminus, the 147-residue chain is Protein MC014 (147 aa).

It is found in the host nucleus. In Homo sapiens (Human), this protein is Protein MC014 (MC014).